Reading from the N-terminus, the 741-residue chain is Catalase-peroxidase 2 (741 aa).

An N-terminal signal peptide occupies residues 1–28 (MQKKRVGKSVVAALAIIAMSAGTVAAWA). Residues 107–228 (WHGAGTYRTY…LAATQMGLIY (122 aa)) constitute a cross-link (tryptophyl-tyrosyl-methioninium (Trp-Tyr) (with M-254)). H108 (proton acceptor) is an active-site residue. A cross-link (tryptophyl-tyrosyl-methioninium (Tyr-Met) (with W-107)) is located at residues 228–254 (YVNPEGPNGNPDPVAAAKDIRDAFGRM). H269 is a binding site for heme b.

The protein belongs to the peroxidase family. Peroxidase/catalase subfamily. In terms of assembly, homodimer or homotetramer. The cofactor is heme b. Post-translationally, formation of the three residue Trp-Tyr-Met cross-link is important for the catalase, but not the peroxidase activity of the enzyme.

The catalysed reaction is H2O2 + AH2 = A + 2 H2O. It carries out the reaction 2 H2O2 = O2 + 2 H2O. Functionally, bifunctional enzyme with both catalase and broad-spectrum peroxidase activity. The polypeptide is Catalase-peroxidase 2 (Burkholderia ambifaria (strain ATCC BAA-244 / DSM 16087 / CCUG 44356 / LMG 19182 / AMMD) (Burkholderia cepacia (strain AMMD))).